The primary structure comprises 389 residues: S-adenosylmethionine synthase (389 aa).

H17 is a binding site for ATP. A Mg(2+)-binding site is contributed by D19. A K(+)-binding site is contributed by E45. Positions 58 and 101 each coordinate L-methionine. Residues 101–111 (QSPDIGQGVDV) are flexible loop. ATP contacts are provided by residues 160 to 162 (DGK), 226 to 227 (RF), D235, 241 to 242 (RK), A258, and K262. D235 contributes to the L-methionine binding site. K266 is a binding site for L-methionine.

This sequence belongs to the AdoMet synthase family. In terms of assembly, homotetramer; dimer of dimers. The cofactor is Mg(2+). K(+) is required as a cofactor.

The protein resides in the cytoplasm. It catalyses the reaction L-methionine + ATP + H2O = S-adenosyl-L-methionine + phosphate + diphosphate. It participates in amino-acid biosynthesis; S-adenosyl-L-methionine biosynthesis; S-adenosyl-L-methionine from L-methionine: step 1/1. In terms of biological role, catalyzes the formation of S-adenosylmethionine (AdoMet) from methionine and ATP. The overall synthetic reaction is composed of two sequential steps, AdoMet formation and the subsequent tripolyphosphate hydrolysis which occurs prior to release of AdoMet from the enzyme. This is S-adenosylmethionine synthase from Anaeromyxobacter sp. (strain Fw109-5).